The primary structure comprises 88 residues: MANTTSAKKATRKIARRTAVNKARRSRVRTFVRQVEEAIASGDQAAAAAALKAAQPELMRAATKGVVHANTASRKVSRLAQRVKALSA.

The tract at residues 1–21 is disordered; that stretch reads MANTTSAKKATRKIARRTAVN.

It belongs to the bacterial ribosomal protein bS20 family.

In terms of biological role, binds directly to 16S ribosomal RNA. The protein is Small ribosomal subunit protein bS20 of Sinorhizobium fredii (strain NBRC 101917 / NGR234).